The primary structure comprises 879 residues: Alanine--tRNA ligase (879 aa).

Residues His566, His570, Cys668, and His672 each contribute to the Zn(2+) site.

This sequence belongs to the class-II aminoacyl-tRNA synthetase family. It depends on Zn(2+) as a cofactor.

The protein resides in the cytoplasm. It catalyses the reaction tRNA(Ala) + L-alanine + ATP = L-alanyl-tRNA(Ala) + AMP + diphosphate. Catalyzes the attachment of alanine to tRNA(Ala) in a two-step reaction: alanine is first activated by ATP to form Ala-AMP and then transferred to the acceptor end of tRNA(Ala). Also edits incorrectly charged Ser-tRNA(Ala) and Gly-tRNA(Ala) via its editing domain. This Clostridium perfringens (strain ATCC 13124 / DSM 756 / JCM 1290 / NCIMB 6125 / NCTC 8237 / Type A) protein is Alanine--tRNA ligase.